A 397-amino-acid polypeptide reads, in one-letter code: Acetate kinase (397 aa).

Asn-7 provides a ligand contact to Mg(2+). Position 14 (Lys-14) interacts with ATP. Arg-90 provides a ligand contact to substrate. The active-site Proton donor/acceptor is the Asp-147. ATP-binding positions include 207–211 (HLGNG), 282–284 (DFR), and 330–334 (GLGEN). Glu-383 contributes to the Mg(2+) binding site.

It belongs to the acetokinase family. In terms of assembly, homodimer. Mg(2+) serves as cofactor. Requires Mn(2+) as cofactor.

The protein localises to the cytoplasm. The enzyme catalyses acetate + ATP = acetyl phosphate + ADP. Its pathway is metabolic intermediate biosynthesis; acetyl-CoA biosynthesis; acetyl-CoA from acetate: step 1/2. In terms of biological role, catalyzes the formation of acetyl phosphate from acetate and ATP. Can also catalyze the reverse reaction. This Clostridium botulinum (strain ATCC 19397 / Type A) protein is Acetate kinase.